We begin with the raw amino-acid sequence, 868 residues long: Homeobox-leucine zipper protein HOX29 (868 aa).

A DNA-binding region (homeobox) is located at residues 9 to 72; sequence DASKYVRYTP…NRRCREKQRK (64 aa). Residues 64-106 adopt a coiled-coil conformation; sequence RRCREKQRKESSRLQALNRKLTAMNKLLMEENDRLQKQVSQLV. The disordered stretch occupies residues 150–171; sequence VTSGHHHQQQQHNVVQPPPRDA. The 229-residue stretch at 169 to 397 folds into the START domain; the sequence is RDASPAGLMS…VAHEDTRSVI (229 aa).

This sequence belongs to the HD-ZIP homeobox family. Class III subfamily. Expressed in phloem.

It localises to the nucleus. Functionally, probable transcription factor that may be necessary for the proper patterning of vascular bundles. In Oryza sativa subsp. japonica (Rice), this protein is Homeobox-leucine zipper protein HOX29 (HOX29).